A 464-amino-acid polypeptide reads, in one-letter code: ATP-dependent protease ATPase subunit HslU (464 aa).

ATP is bound by residues Ile-19, 61 to 66, Asp-277, Glu-342, and Arg-414; that span reads GVGKTE.

Belongs to the ClpX chaperone family. HslU subfamily. A double ring-shaped homohexamer of HslV is capped on each side by a ring-shaped HslU homohexamer. The assembly of the HslU/HslV complex is dependent on binding of ATP.

The protein resides in the cytoplasm. Its function is as follows. ATPase subunit of a proteasome-like degradation complex; this subunit has chaperone activity. The binding of ATP and its subsequent hydrolysis by HslU are essential for unfolding of protein substrates subsequently hydrolyzed by HslV. HslU recognizes the N-terminal part of its protein substrates and unfolds these before they are guided to HslV for hydrolysis. This is ATP-dependent protease ATPase subunit HslU from Lactobacillus gasseri (strain ATCC 33323 / DSM 20243 / BCRC 14619 / CIP 102991 / JCM 1131 / KCTC 3163 / NCIMB 11718 / NCTC 13722 / AM63).